The primary structure comprises 189 residues: 3-isopropylmalate dehydratase small subunit (189 aa).

This sequence belongs to the LeuD family. LeuD type 1 subfamily. In terms of assembly, heterodimer of LeuC and LeuD.

It carries out the reaction (2R,3S)-3-isopropylmalate = (2S)-2-isopropylmalate. It functions in the pathway amino-acid biosynthesis; L-leucine biosynthesis; L-leucine from 3-methyl-2-oxobutanoate: step 2/4. Functionally, catalyzes the isomerization between 2-isopropylmalate and 3-isopropylmalate, via the formation of 2-isopropylmaleate. This Francisella tularensis subsp. holarctica (strain FTNF002-00 / FTA) protein is 3-isopropylmalate dehydratase small subunit.